The primary structure comprises 427 residues: Acyl-CoA hydrolase 2 (427 aa).

Residue 15–83 (LLQKLPSSSL…FLLKQYDYFG (69 aa)) coordinates a nucleoside 3',5'-cyclic phosphate. Residues D337, S359, and Q409 each act as charge relay system in the active site. The Microbody targeting signal motif lies at 425–427 (SKL).

The protein belongs to the C/M/P thioester hydrolase family. Homotetramer. As to expression, mostly expressed in leaves and flowers, and, to a lower extent, in seedlings and siliques.

The protein resides in the peroxisome matrix. It carries out the reaction a fatty acyl-CoA + H2O = a fatty acid + CoA + H(+). The enzyme catalyses dodecanoyl-CoA + H2O = dodecanoate + CoA + H(+). It catalyses the reaction tetradecanoyl-CoA + H2O = tetradecanoate + CoA + H(+). The catalysed reaction is octadecanoyl-CoA + H2O = octadecanoate + CoA + H(+). It carries out the reaction (9Z)-hexadecenoyl-CoA + H2O = (9Z)-hexadecenoate + CoA + H(+). The enzyme catalyses (5Z,8Z,11Z,14Z)-eicosatetraenoyl-CoA + H2O = (5Z,8Z,11Z,14Z)-eicosatetraenoate + CoA + H(+). It catalyses the reaction hexadecanoyl-CoA + H2O = hexadecanoate + CoA + H(+). The catalysed reaction is (9Z)-octadecenoyl-CoA + H2O = (9Z)-octadecenoate + CoA + H(+). It carries out the reaction (9Z,12Z)-octadecadienoyl-CoA + H2O = (9Z,12Z)-octadecadienoate + CoA + H(+). Its pathway is lipid metabolism; fatty acid metabolism. Its activity is regulated as follows. Insensitive to feedback inhibition by free coenzyme A (CoASH). In terms of biological role, catalyzes the hydrolysis of acyl-CoAs into free fatty acids and coenzyme A (CoASH), regulating their respective intracellular levels. Active with both medium chain and long chain acyl-CoAs (e.g. 12:0-CoA, 14:0-CoA, 16:0-CoA, 18:0-CoA, 16:1-CoA, 18:1-CoA, 18:2-CoA and 20:4-CoA) as substrates, palmitoleoyl-CoA (16:1-CoA) being the favorite substrate. In Arabidopsis thaliana (Mouse-ear cress), this protein is Acyl-CoA hydrolase 2.